A 322-amino-acid chain; its full sequence is Transcription cofactor vestigial-like protein 2 (322 aa).

Residues 42–61 (ASPGSSASGSSSFSNPTPAS) are compositionally biased toward low complexity. Disordered stretches follow at residues 42–75 (ASPG…ERPP) and 248–322 (PGRL…PTLG). Basic and acidic residues predominate over residues 62–75 (VKEEEGSPEKERPP). Composition is skewed to low complexity over residues 248–258 (PGRLAPASAPA) and 270–283 (GEPA…PGGP). Residues 312-322 (SAPPALYPTLG) show a composition bias toward pro residues.

This sequence belongs to the vestigial family. As to quaternary structure, interacts with TEFs. Binds to TEAD1/TEF1. In terms of tissue distribution, skeletal muscle specific.

The protein localises to the nucleus. In terms of biological role, may act as a specific coactivator for the mammalian TEFs. May play a role in the development of skeletal muscles. The chain is Transcription cofactor vestigial-like protein 2 (Vgll2) from Mus musculus (Mouse).